The following is a 31-amino-acid chain: Dermaseptin-DI3 (31 aa).

The protein belongs to the frog skin active peptide (FSAP) family. Dermaseptin subfamily. As to expression, expressed by the skin glands.

The protein localises to the secreted. In terms of biological role, antibacterial activity against Gram-positive bacteria S.aureus and E.faecalis, and Gram-negative bacteria P.aeruginosa and E.coli. The protein is Dermaseptin-DI3 of Phyllomedusa distincta (Monkey frog).